A 350-amino-acid chain; its full sequence is Glutamyl-tRNA reductase (350 aa).

Substrate-binding positions include 53–56, serine 105, 110–112, and glutamine 116; these read TCNR and ETQ. Cysteine 54 acts as the Nucleophile in catalysis. 185–190 provides a ligand contact to NADP(+); that stretch reads GAGETA.

This sequence belongs to the glutamyl-tRNA reductase family. As to quaternary structure, homodimer.

The enzyme catalyses (S)-4-amino-5-oxopentanoate + tRNA(Glu) + NADP(+) = L-glutamyl-tRNA(Glu) + NADPH + H(+). The protein operates within porphyrin-containing compound metabolism; protoporphyrin-IX biosynthesis; 5-aminolevulinate from L-glutamyl-tRNA(Glu): step 1/2. Its function is as follows. Catalyzes the NADPH-dependent reduction of glutamyl-tRNA(Glu) to glutamate 1-semialdehyde (GSA). The polypeptide is Glutamyl-tRNA reductase (Deinococcus radiodurans (strain ATCC 13939 / DSM 20539 / JCM 16871 / CCUG 27074 / LMG 4051 / NBRC 15346 / NCIMB 9279 / VKM B-1422 / R1)).